A 257-amino-acid polypeptide reads, in one-letter code: Homeobox protein goosecoid (257 aa).

The homeobox DNA-binding region spans 160–219 (KRRHRTIFTDEQLEALENLFQETKYPDVGTREQLARKVHLREEKVEVWFKNRRAKWRRQK). The interval 213-257 (AKWRRQKRSSSEESENAEKWNKTSSSKASPEKREEEGKSDLDSDS) is disordered. Residues 241–257 (SPEKREEEGKSDLDSDS) are compositionally biased toward basic and acidic residues.

It belongs to the paired homeobox family. Bicoid subfamily.

Its subcellular location is the nucleus. In terms of biological role, regulates chordin (CHRD). May play a role in spatial programing within discrete embryonic fields or lineage compartments during organogenesis. In concert with NKX3-2, plays a role in defining the structural components of the middle ear; required for the development of the entire tympanic ring. Probably involved in the regulatory networks that define neural crest cell fate specification and determine mesoderm cell lineages in mammals. The protein is Homeobox protein goosecoid (GSC) of Pongo pygmaeus (Bornean orangutan).